Here is a 101-residue protein sequence, read N- to C-terminus: Small ribosomal subunit protein uS14 (101 aa).

This sequence belongs to the universal ribosomal protein uS14 family. In terms of assembly, part of the 30S ribosomal subunit. Contacts proteins S3 and S10.

Binds 16S rRNA, required for the assembly of 30S particles and may also be responsible for determining the conformation of the 16S rRNA at the A site. This chain is Small ribosomal subunit protein uS14, found in Polynucleobacter necessarius subsp. necessarius (strain STIR1).